The sequence spans 944 residues: Leucine--tRNA ligase 2 (944 aa).

The 'HIGH' region signature appears at 36–46 (PYPNSPFHLGH). The short motif at 621–625 (KMSKS) is the 'KMSKS' region element. K624 provides a ligand contact to ATP.

The protein belongs to the class-I aminoacyl-tRNA synthetase family.

The protein resides in the cytoplasm. The enzyme catalyses tRNA(Leu) + L-leucine + ATP = L-leucyl-tRNA(Leu) + AMP + diphosphate. This Sulfurisphaera tokodaii (strain DSM 16993 / JCM 10545 / NBRC 100140 / 7) (Sulfolobus tokodaii) protein is Leucine--tRNA ligase 2.